Consider the following 579-residue polypeptide: Laccase (579 aa).

The tat-type signal signal peptide spans Met1–Ala31. Positions Trp82–Thr214 constitute a Plastocyanin-like 1 domain. Cu cation contacts are provided by His145, His147, His192, and His194. A disordered region spans residues Val372–Asp401. Residues Leu423–Glu530 enclose the Plastocyanin-like 2 domain. Residue Asn449 is glycosylated (N-linked (GlcNAc...) asparagine). Residues His455, His458, His460, His512, Cys513, His514, His518, and Met523 each contribute to the Cu cation site. Residue Asn557 is glycosylated (N-linked (GlcNAc...) asparagine).

Belongs to the multicopper oxidase family. The cofactor is Cu(2+). Exported by the Tat system. Post-translationally, glycosylated.

The protein resides in the secreted. The catalysed reaction is 4 hydroquinone + O2 = 4 benzosemiquinone + 2 H2O. Inhibited by 1 mM NaN(3), 10 mM thiourea, 10 mM 1,10-phenanthroline, 0.1 mM DL-dithiothreitol (DTT) and 1 mM L-cysteine. The inhibition by DTT and L-cysteine is likely caused by reduction of the oxidized substrate and not by inhibition of the enzyme. In terms of biological role, catalyzes the oxidation of a wide variety of organic substrates, including bilirubin, syringaldazine (SGZ), 2,2'-azino-di-(3-ethylbenzothiazoline)-6-sulfonic acid (ABTS) and dimethoxyphenol (DMP). No oxidation of Fe(2+) or guaiacol. The chain is Laccase (lccA) from Haloferax volcanii (strain ATCC 29605 / DSM 3757 / JCM 8879 / NBRC 14742 / NCIMB 2012 / VKM B-1768 / DS2) (Halobacterium volcanii).